The primary structure comprises 185 residues: uncharacterized protein (185 aa).

The first 29 residues, 1–29 (MKLFSRTSLVALGTAAAITLSGVTAPAFA), serve as a signal peptide directing secretion. The tract at residues 41 to 66 (KTAEDNTPEAPGASTPLKLEQPGTIT) is disordered.

In terms of processing, glycosylated; by Pmt.

The protein resides in the secreted. This is an uncharacterized protein from Corynebacterium glutamicum (strain ATCC 13032 / DSM 20300 / JCM 1318 / BCRC 11384 / CCUG 27702 / LMG 3730 / NBRC 12168 / NCIMB 10025 / NRRL B-2784 / 534).